Here is a 314-residue protein sequence, read N- to C-terminus: Ribonuclease Z (314 aa).

Zn(2+)-binding residues include His-61, His-63, Asp-65, His-66, His-137, Asp-207, and His-263. Asp-65 (proton acceptor) is an active-site residue.

Belongs to the RNase Z family. As to quaternary structure, homodimer. Zn(2+) is required as a cofactor.

It carries out the reaction Endonucleolytic cleavage of RNA, removing extra 3' nucleotides from tRNA precursor, generating 3' termini of tRNAs. A 3'-hydroxy group is left at the tRNA terminus and a 5'-phosphoryl group is left at the trailer molecule.. Zinc phosphodiesterase, which displays some tRNA 3'-processing endonuclease activity. Probably involved in tRNA maturation, by removing a 3'-trailer from precursor tRNA. This chain is Ribonuclease Z, found in Thermococcus kodakarensis (strain ATCC BAA-918 / JCM 12380 / KOD1) (Pyrococcus kodakaraensis (strain KOD1)).